The chain runs to 211 residues: Arginine exporter protein ArgO (211 aa).

6 helical membrane-spanning segments follow: residues 1–21 (MISY…PLGP), 37–57 (LMIA…GIFG), 68–88 (LLAL…FGAL), 111–131 (IIAT…DTFV), 147–167 (WFAL…ALLA), and 179–199 (AQRI…FQLA).

This sequence belongs to the LysE/ArgO transporter (TC 2.A.75) family.

It localises to the cell inner membrane. It carries out the reaction L-arginine(in) = L-arginine(out). In terms of biological role, involved in the export of arginine. Important to control the intracellular level of arginine and the correct balance between arginine and lysine. The protein is Arginine exporter protein ArgO of Salmonella paratyphi B (strain ATCC BAA-1250 / SPB7).